The chain runs to 645 residues: Exoribonuclease 2 (645 aa).

The region spanning 191–517 is the RNB domain; the sequence is REDLTELNFI…MNHRLLKALI (327 aa). Residues 563-645 enclose the S1 motif domain; the sequence is HIRYSAEIID…DNRSIIAKIV (83 aa).

This sequence belongs to the RNR ribonuclease family. RNase II subfamily.

The protein localises to the cytoplasm. It carries out the reaction Exonucleolytic cleavage in the 3'- to 5'-direction to yield nucleoside 5'-phosphates.. Functionally, involved in mRNA degradation. Hydrolyzes single-stranded polyribonucleotides processively in the 3' to 5' direction. This Baumannia cicadellinicola subsp. Homalodisca coagulata protein is Exoribonuclease 2.